The primary structure comprises 480 residues: Type II methyltransferase M.NspV (480 aa).

Belongs to the methyltransferase superfamily.

A gamma subtype methylase that recognizes the double-stranded sequence 5'-TTCGAA-3', and methylates it on an unknown base to protect it against the NspV endonuclease. The sequence is that of Type II methyltransferase M.NspV from Nostoc sp. (strain ATCC 29411 / PCC 7524).